Here is a 408-residue protein sequence, read N- to C-terminus: Serine/threonine transporter SstT (408 aa).

9 helical membrane-spanning segments follow: residues 11–31, 43–63, 82–102, 141–161, 192–212, 216–236, 298–318, 339–359, and 363–383; these read LANG…VSLA, FLGS…VFIL, IVVL…LLSM, ALMT…GLAL, IGIF…AIAG, LLAV…PLIV, MGGA…TLGI, ASGV…LFGI, and VAMQ…AAET.

It belongs to the dicarboxylate/amino acid:cation symporter (DAACS) (TC 2.A.23) family.

The protein resides in the cell inner membrane. It catalyses the reaction L-serine(in) + Na(+)(in) = L-serine(out) + Na(+)(out). It carries out the reaction L-threonine(in) + Na(+)(in) = L-threonine(out) + Na(+)(out). Involved in the import of serine and threonine into the cell, with the concomitant import of sodium (symport system). The sequence is that of Serine/threonine transporter SstT from Shewanella sp. (strain MR-7).